We begin with the raw amino-acid sequence, 256 residues long: Thiazole synthase (256 aa).

K95 (schiff-base intermediate with DXP) is an active-site residue. Residues G156, 182-183 (AG), and 204-205 (NT) each bind 1-deoxy-D-xylulose 5-phosphate.

The protein belongs to the ThiG family. In terms of assembly, homotetramer. Forms heterodimers with either ThiH or ThiS.

It is found in the cytoplasm. It catalyses the reaction [ThiS sulfur-carrier protein]-C-terminal-Gly-aminoethanethioate + 2-iminoacetate + 1-deoxy-D-xylulose 5-phosphate = [ThiS sulfur-carrier protein]-C-terminal Gly-Gly + 2-[(2R,5Z)-2-carboxy-4-methylthiazol-5(2H)-ylidene]ethyl phosphate + 2 H2O + H(+). It participates in cofactor biosynthesis; thiamine diphosphate biosynthesis. Catalyzes the rearrangement of 1-deoxy-D-xylulose 5-phosphate (DXP) to produce the thiazole phosphate moiety of thiamine. Sulfur is provided by the thiocarboxylate moiety of the carrier protein ThiS. In vitro, sulfur can be provided by H(2)S. The polypeptide is Thiazole synthase (Klebsiella pneumoniae (strain 342)).